An 884-amino-acid chain; its full sequence is Valine--tRNA ligase (884 aa).

The 'HIGH' region signature appears at 47-57 (PNVTGALHIGH). The 'KMSKS' region motif lies at 525-529 (KMSKS). ATP is bound at residue Lys-528. Residues 812 to 884 (AVDFEAELAR…QQRFRDAIGK (73 aa)) are a coiled coil.

This sequence belongs to the class-I aminoacyl-tRNA synthetase family. ValS type 1 subfamily. As to quaternary structure, monomer.

It is found in the cytoplasm. It carries out the reaction tRNA(Val) + L-valine + ATP = L-valyl-tRNA(Val) + AMP + diphosphate. In terms of biological role, catalyzes the attachment of valine to tRNA(Val). As ValRS can inadvertently accommodate and process structurally similar amino acids such as threonine, to avoid such errors, it has a 'posttransfer' editing activity that hydrolyzes mischarged Thr-tRNA(Val) in a tRNA-dependent manner. This is Valine--tRNA ligase from Nitratidesulfovibrio vulgaris (strain ATCC 29579 / DSM 644 / CCUG 34227 / NCIMB 8303 / VKM B-1760 / Hildenborough) (Desulfovibrio vulgaris).